A 141-amino-acid polypeptide reads, in one-letter code: Nucleoside diphosphate kinase (141 aa).

Lysine 11, phenylalanine 59, arginine 87, threonine 93, arginine 104, and asparagine 114 together coordinate ATP. The Pros-phosphohistidine intermediate role is filled by histidine 117.

Belongs to the NDK family. As to quaternary structure, homotetramer. Mg(2+) is required as a cofactor.

Its subcellular location is the cytoplasm. It catalyses the reaction a 2'-deoxyribonucleoside 5'-diphosphate + ATP = a 2'-deoxyribonucleoside 5'-triphosphate + ADP. The catalysed reaction is a ribonucleoside 5'-diphosphate + ATP = a ribonucleoside 5'-triphosphate + ADP. Major role in the synthesis of nucleoside triphosphates other than ATP. The ATP gamma phosphate is transferred to the NDP beta phosphate via a ping-pong mechanism, using a phosphorylated active-site intermediate. In Legionella pneumophila (strain Lens), this protein is Nucleoside diphosphate kinase.